Reading from the N-terminus, the 102-residue chain is NADH-quinone oxidoreductase subunit K 1 (102 aa).

3 helical membrane passes run 5–25, 31–51, and 65–85; these read ISHYLTVSAILFTLGVFGIFL, IIILMSVELILLAVNINMVAF, and LFILTVAAAEAAIGLAILVVF.

The protein belongs to the complex I subunit 4L family. As to quaternary structure, NDH-1 is composed of 14 different subunits. Subunits NuoA, H, J, K, L, M, N constitute the membrane sector of the complex.

It localises to the cell inner membrane. The enzyme catalyses a quinone + NADH + 5 H(+)(in) = a quinol + NAD(+) + 4 H(+)(out). NDH-1 shuttles electrons from NADH, via FMN and iron-sulfur (Fe-S) centers, to quinones in the respiratory chain. The immediate electron acceptor for the enzyme in this species is believed to be ubiquinone. Couples the redox reaction to proton translocation (for every two electrons transferred, four hydrogen ions are translocated across the cytoplasmic membrane), and thus conserves the redox energy in a proton gradient. The protein is NADH-quinone oxidoreductase subunit K 1 of Rhizobium meliloti (strain 1021) (Ensifer meliloti).